Here is a 727-residue protein sequence, read N- to C-terminus: Platelet endothelial cell adhesion molecule (727 aa).

Residues 1–17 (MLLALGLTLVLYASLQA) form the signal peptide. Topologically, residues 18-590 (EENSFTINSI…VRVFLAPWKK (573 aa)) are extracellular. Ig-like C2-type domains are found at residues 40–126 (GQQL…PKVT), 135–213 (GGVV…PIRS), 225–309 (PKFE…IMVN), 315–391 (PKPK…LVPI), 413–472 (GHAI…NCHS), and 488–578 (PVDE…RSST). The cysteines at positions 47 and 99 are disulfide-linked. N-linked (GlcNAc...) asparagine glycosylation is found at asparagine 74 and asparagine 141. 2 disulfide bridges follow: cysteine 142/cysteine 195 and cysteine 245/cysteine 293. Asparagine 309, asparagine 345, asparagine 360, asparagine 424, and asparagine 540 each carry an N-linked (GlcNAc...) asparagine glycan. Cystine bridges form between cysteine 336-cysteine 375, cysteine 420-cysteine 465, and cysteine 512-cysteine 561. A helical membrane pass occupies residues 591–609 (GLIAVVVIGVVIATLIVAA). Residues 610-727 (KCYFLRKAKA…SRTEGSLNGT (118 aa)) lie on the Cytoplasmic side of the membrane. Cysteine 611 carries the S-palmitoyl cysteine lipid modification. The segment at 642–672 (SEPSVEANSHYGYDDVSGNDAVKPINQNKDP) is disordered. 2 consecutive short sequence motifs (ITIM motif) follow at residues 677-682 (VEYTEV) and 700-705 (TVYSEI). Phosphotyrosine; by FER occurs at positions 679 and 702. Positions 698–718 (TETVYSEIRKVDPNLMENRYS) are membrane-bound segment which detaches upon phosphorylation. A may play a role in cytoprotective signaling region spans residues 710–727 (PNLMENRYSRTEGSLNGT). Phosphoserine is present on residues serine 718 and serine 723.

In terms of assembly, trans-homodimer (via Ig-like C2-type 1 and Ig-like C2-type 2 domains); trans-homodimerization is required for cell-cell interaction. Forms a complex with BDKRB2 and GNAQ. Interacts with BDKRB2 and GNAQ. Interacts with PTPN11; Tyr-702 is critical for PTPN11 recruitment. Interacts with FER. Interacts with CD177; the interaction is Ca(2+)-dependent; the interaction is direct. In terms of processing, phosphorylated on Ser and Tyr residues by src kinases after cellular activation. Upon activation, phosphorylated on Ser-718 which probably initiates the dissociation of the membrane-interaction segment (residues 698-718) from the cell membrane allowing the sequential phosphorylation of Tyr-702 and Tyr-679. Constitutively phosphorylated on Ser-723 in resting platelets. Phosphorylated on tyrosine residues by FER and FES in response to FCER1 activation. In endothelial cells Fyn mediates mechanical-force (stretch or pull) induced tyrosine phosphorylation. Palmitoylation by ZDHHC21 is necessary for cell surface expression in endothelial cells and enrichment in membrane rafts. As to expression, expressed in lung and platelets (at protein level).

It is found in the cell membrane. Its subcellular location is the membrane raft. The protein localises to the cell junction. Cell adhesion molecule which is required for leukocyte transendothelial migration (TEM) under most inflammatory conditions. Tyr-679 plays a critical role in TEM and is required for efficient trafficking of PECAM1 to and from the lateral border recycling compartment (LBRC) and is also essential for the LBRC membrane to be targeted around migrating leukocytes. Trans-homophilic interaction may play a role in endothelial cell-cell adhesion via cell junctions. Heterophilic interaction with CD177 plays a role in transendothelial migration of neutrophils. Homophilic ligation of PECAM1 prevents macrophage-mediated phagocytosis of neighboring viable leukocytes by transmitting a detachment signal. Promotes macrophage-mediated phagocytosis of apoptotic leukocytes by tethering them to the phagocytic cells; PECAM1-mediated detachment signal appears to be disabled in apoptotic leukocytes. Modulates bradykinin receptor BDKRB2 activation. Regulates bradykinin- and hyperosmotic shock-induced ERK1/2 activation in endothelial cells. Induces susceptibility to atherosclerosis. This chain is Platelet endothelial cell adhesion molecule (Pecam1), found in Mus musculus (Mouse).